The primary structure comprises 240 residues: REF/SRPP-like protein At1g67360 (240 aa).

Residues 208 to 240 (KEDARRKKGGDTAGKKGETTDAADGDKSSSDSE) form a disordered region.

It belongs to the REF/SRPP family.

This Arabidopsis thaliana (Mouse-ear cress) protein is REF/SRPP-like protein At1g67360.